We begin with the raw amino-acid sequence, 375 residues long: uncharacterized protein (375 aa).

This sequence belongs to the mimivirus L17x/L18x family.

This is an uncharacterized protein from Acanthamoeba polyphaga mimivirus (APMV).